A 1222-amino-acid chain; its full sequence is ATP-dependent helicase/nuclease subunit A (1222 aa).

The UvrD-like helicase ATP-binding domain occupies 39–495 (QKRTAQQIEA…ILLKENFRSQ (457 aa)). 60–67 (ASAGSGKT) serves as a coordination point for ATP. A UvrD-like helicase C-terminal domain is found at 524-810 (QLIAGSHAQT…NLMTIHKSKG (287 aa)).

It belongs to the helicase family. AddA subfamily. Heterodimer of AddA and AddB/RexB. The cofactor is Mg(2+).

The enzyme catalyses Couples ATP hydrolysis with the unwinding of duplex DNA by translocating in the 3'-5' direction.. It carries out the reaction ATP + H2O = ADP + phosphate + H(+). The heterodimer acts as both an ATP-dependent DNA helicase and an ATP-dependent, dual-direction single-stranded exonuclease. Recognizes the chi site generating a DNA molecule suitable for the initiation of homologous recombination. The AddA nuclease domain is required for chi fragment generation; this subunit has the helicase and 3' -&gt; 5' nuclease activities. The chain is ATP-dependent helicase/nuclease subunit A from Streptococcus pyogenes serotype M18 (strain MGAS8232).